A 400-amino-acid chain; its full sequence is Tryptophan synthase beta chain (400 aa).

Lys-92 carries the post-translational modification N6-(pyridoxal phosphate)lysine.

This sequence belongs to the TrpB family. Tetramer of two alpha and two beta chains. The cofactor is pyridoxal 5'-phosphate.

The enzyme catalyses (1S,2R)-1-C-(indol-3-yl)glycerol 3-phosphate + L-serine = D-glyceraldehyde 3-phosphate + L-tryptophan + H2O. It participates in amino-acid biosynthesis; L-tryptophan biosynthesis; L-tryptophan from chorismate: step 5/5. Functionally, the beta subunit is responsible for the synthesis of L-tryptophan from indole and L-serine. The sequence is that of Tryptophan synthase beta chain from Leptospira borgpetersenii serovar Hardjo-bovis (strain JB197).